Consider the following 154-residue polypeptide: Sperm microtubule associated protein 1 (154 aa).

The sequence is that of Sperm microtubule associated protein 1 from Homo sapiens (Human).